A 500-amino-acid chain; its full sequence is Cytochrome P450 71D13 (500 aa).

The helical; Signal-anchor for type II membrane protein transmembrane segment at 3-23 (LQISSAIIILVVTYTISLLII) threads the bilayer. Cys-439 provides a ligand contact to heme.

The protein belongs to the cytochrome P450 family. It depends on heme as a cofactor.

It localises to the endoplasmic reticulum membrane. It catalyses the reaction (4S)-limonene + reduced [NADPH--hemoprotein reductase] + O2 = (1S,6R)-isopiperitenol + oxidized [NADPH--hemoprotein reductase] + H2O + H(+). Hydroxylates (-)-(4S)-limonene to (-)-trans-isopiperitenol, a precursor of (-)-menthol, responsible for the cooling sensation of peppermint. The chain is Cytochrome P450 71D13 (CYP71D13) from Mentha piperita (Peppermint).